We begin with the raw amino-acid sequence, 157 residues long: MFDVLMYLFETYVQSELDFMVDQDALTDELTRAGFQKPEIYKALSWLEQLAALHDSEDAPEYTACASDSFRIYASEEMLKLSTECRGFLLFLEQIRVLNCDTREIVIERLMELDSPEIELDDLKWVVMMVLFNLPGGENACHQMEELMFEPEAITIQ.

The protein belongs to the Smg family.

The polypeptide is Protein Smg homolog (Tolumonas auensis (strain DSM 9187 / NBRC 110442 / TA 4)).